A 227-amino-acid polypeptide reads, in one-letter code: 7-cyano-7-deazaguanine synthase (227 aa).

16–26 (FSGGQDSTTCL) provides a ligand contact to ATP. The Zn(2+) site is built by cysteine 194, cysteine 202, cysteine 205, and cysteine 208.

It belongs to the QueC family. Zn(2+) serves as cofactor.

It carries out the reaction 7-carboxy-7-deazaguanine + NH4(+) + ATP = 7-cyano-7-deazaguanine + ADP + phosphate + H2O + H(+). It participates in purine metabolism; 7-cyano-7-deazaguanine biosynthesis. Functionally, catalyzes the ATP-dependent conversion of 7-carboxy-7-deazaguanine (CDG) to 7-cyano-7-deazaguanine (preQ(0)). The protein is 7-cyano-7-deazaguanine synthase of Haemophilus influenzae (strain 86-028NP).